The following is a 76-amino-acid chain: Exodeoxyribonuclease 7 small subunit (76 aa).

Belongs to the XseB family. In terms of assembly, heterooligomer composed of large and small subunits.

The protein localises to the cytoplasm. It carries out the reaction Exonucleolytic cleavage in either 5'- to 3'- or 3'- to 5'-direction to yield nucleoside 5'-phosphates.. Its function is as follows. Bidirectionally degrades single-stranded DNA into large acid-insoluble oligonucleotides, which are then degraded further into small acid-soluble oligonucleotides. This Staphylococcus epidermidis (strain ATCC 35984 / DSM 28319 / BCRC 17069 / CCUG 31568 / BM 3577 / RP62A) protein is Exodeoxyribonuclease 7 small subunit.